A 220-amino-acid chain; its full sequence is Inner kinetochore subunit fta3 (220 aa).

Belongs to the CENP-H/MCM16 family. Component of the inner kinetochore constitutive centromere-associated network (CCAN) (also known as central kinetochore Sim4 complex in fission yeast), which is composed of at least cnl2, cnp3, cnp20, fta1, fta2, fta3, fta4, fta6, fta7, mal2, mhf1, mhf2, mis6, mis15, mis17, sim4 and wip1.

The protein localises to the nucleus. It localises to the chromosome. It is found in the centromere. Its subcellular location is the kinetochore. Functionally, component of the kinetochore, a multiprotein complex that assembles on centromeric DNA and attaches chromosomes to spindle microtubules, mediating chromosome segregation and sister chromatid segregation during meiosis and mitosis. Component of the inner kinetochore constitutive centromere-associated network (CCAN), which serves as a structural platform for outer kinetochore assembly. Fta2, fta3 and fta4 associate with the central core (cnt) and inner repeat (inr) region of the centromere. In Schizosaccharomyces pombe (strain 972 / ATCC 24843) (Fission yeast), this protein is Inner kinetochore subunit fta3 (fta3).